A 322-amino-acid chain; its full sequence is MTKNAPTASVITRLSPAKINLFLHITGKRADGYHNLQTVFRLLDWGDYLHFSVANKPMATIDSAVDNSAVDINSLCGQLLTLDGAEAITSSIEDNLIFKAARTLLAAAIDSSKLPEHLPKVLVTLDKHLPMGAGLGGGSSNAATTLLVLNEIWQLNFNQETLIKIGAKIGADVPIFIFGQDAIATGIGEQLTAIDLPDQQYLVLTPNAHVNTAKLFAHPKLPRDITLLSIETIKNQYDNYVQTLIAPYHNVFTPVVTSLAPAVDEGLRYLQGLEKIALGTARMTGSGSTVFLPLDASVTDDKLLLSKWIEEAPCTAYVVRSL.

Lys18 is an active-site residue. Position 130–140 (130–140) interacts with ATP; it reads PMGAGLGGGSS. Asp172 is an active-site residue.

It belongs to the GHMP kinase family. IspE subfamily.

It catalyses the reaction 4-CDP-2-C-methyl-D-erythritol + ATP = 4-CDP-2-C-methyl-D-erythritol 2-phosphate + ADP + H(+). The protein operates within isoprenoid biosynthesis; isopentenyl diphosphate biosynthesis via DXP pathway; isopentenyl diphosphate from 1-deoxy-D-xylulose 5-phosphate: step 3/6. Functionally, catalyzes the phosphorylation of the position 2 hydroxy group of 4-diphosphocytidyl-2C-methyl-D-erythritol. The chain is 4-diphosphocytidyl-2-C-methyl-D-erythritol kinase from Psychrobacter arcticus (strain DSM 17307 / VKM B-2377 / 273-4).